The primary structure comprises 111 residues: Resistin-like alpha (111 aa).

A signal peptide spans methionine 1–threonine 23. 5 disulfides stabilise this stretch: cysteine 55–cysteine 108, cysteine 67–cysteine 107, cysteine 76–cysteine 93, cysteine 78–cysteine 95, and cysteine 82–cysteine 97.

This sequence belongs to the resistin/FIZZ family. In terms of assembly, monomer. As to expression, highest levels in adipose tissue.

Its subcellular location is the secreted. Functionally, probable hormone. Plays a role in pulmonary vascular remodeling. In Mus musculus (Mouse), this protein is Resistin-like alpha (Retnla).